A 156-amino-acid chain; its full sequence is Ribonuclease pancreatic (156 aa).

An N-terminal signal peptide occupies residues M1–G28. The segment covering A33–S43 has biased composition (basic and acidic residues). A disordered region spans residues A33–T52. Substrate is bound by residues K35 and R38. Residue H40 is the Proton acceptor of the active site. 2 N-linked (GlcNAc...) asparagine glycosylation sites follow: N50 and N62. Intrachain disulfides connect C54-C112, C68-C123, C86-C138, and C93-C100. Substrate is bound by residues K69–T73 and K94. N-linked (GlcNAc...) asparagine glycosylation occurs at N104. Position 113 (R113) interacts with substrate. Residue N116 is glycosylated (N-linked (GlcNAc...) asparagine). H147 acts as the Proton donor in catalysis.

Belongs to the pancreatic ribonuclease family. Monomer. Interacts with and forms tight 1:1 complexes with RNH1. Dimerization of two such complexes may occur. Interaction with RNH1 inhibits this protein.

Its subcellular location is the secreted. The enzyme catalyses an [RNA] containing cytidine + H2O = an [RNA]-3'-cytidine-3'-phosphate + a 5'-hydroxy-ribonucleotide-3'-[RNA].. It carries out the reaction an [RNA] containing uridine + H2O = an [RNA]-3'-uridine-3'-phosphate + a 5'-hydroxy-ribonucleotide-3'-[RNA].. Endonuclease that catalyzes the cleavage of RNA on the 3' side of pyrimidine nucleotides. Acts on single-stranded and double-stranded RNA. The chain is Ribonuclease pancreatic (RNASE1) from Gorilla gorilla gorilla (Western lowland gorilla).